Reading from the N-terminus, the 568-residue chain is Protein phosphatase 1 regulatory inhibitor subunit 16B (568 aa).

A coiled-coil region spans residues 15–55; sequence EKVPTLERLRAAQKRRAQQLKKWAQYEQDLLHRKRKHERKR. Residue S69 is modified to Phosphoserine. 4 ANK repeats span residues 100–129, 133–162, 228–257, and 261–290; these read DGLT…NVNA, ELWT…DLLA, QGAT…RVDV, and DGWE…SLSA. Residues S333, S337, and S350 each carry the phosphoserine modification. The tract at residues 373–403 is disordered; it reads SAAEDQRTSTYNGDIRETRTDQENKDPNPRL. Residues 386 to 403 show a composition bias toward basic and acidic residues; sequence DIRETRTDQENKDPNPRL. S477 carries the phosphoserine modification. Over residues 505–517 the composition is skewed to low complexity; that stretch reads SSVARSGESSSEG. The tract at residues 505–527 is disordered; it reads SSVARSGESSSEGKAPLIGGRTS. The ANK 5 repeat unit spans residues 531 to 560; sequence SNGTSVYYTVTSGDPPLLKFKAPMEEMEEK. The S-palmitoyl cysteine moiety is linked to residue C564. The residue at position 565 (C565) is a Cysteine methyl ester. C565 carries S-farnesyl cysteine lipidation. A propeptide spans 566–568 (removed in mature form); the sequence is RIS.

As to quaternary structure, interacts with PPP1CA, PPP1CB and MSN. Interacts (via its fourth ankyrin repeat) with the mature dimeric form of RPSA/LAMR1. Interacts with EEF1A1. Interacts with PTEN. Interacts with ECE1. Post-translationally, phosphorylated by PKA and, after PKA priming, by GSK3B. Phosphorylation by GSK3B reduces its association with PP1C and enhances PP1C activity. Dephosphorylation by its associated PP1C results in enhanced association with PP1C, but reduced PP1C activity.

The protein resides in the cell membrane. The protein localises to the nucleus. It is found in the cell projection. Regulator of protein phosphatase 1 (PP1) that acts as a positive regulator of pulmonary endothelial cell (EC) barrier function. Protects the endothelial barrier from lipopolysaccharide (LPS)-induced vascular leakage. Involved in the regulation of the PI3K/AKT signaling pathway. Involved in the regulation of angiogenesis and endothelial cell proliferation through the control of ECE1 dephosphorylation, trafficking and activity. Involved in the regulation of endothelial cell filopodia extension. May be a downstream target for TGF-beta1 signaling cascade in endothelial cells. Involved in PKA-mediated moesin dephosphorylation which is important in EC barrier protection against thrombin stimulation. Promotes the interaction of PPP1CA with RPSA/LAMR1 and in turn facilitates the dephosphorylation of RPSA/LAMR1. Involved in the dephosphorylation of EEF1A1. In Mus musculus (Mouse), this protein is Protein phosphatase 1 regulatory inhibitor subunit 16B (Ppp1r16b).